The following is a 118-amino-acid chain: Ribonuclease P protein component 2 (118 aa).

It belongs to the eukaryotic/archaeal RNase P protein component 2 family. In terms of assembly, consists of a catalytic RNA component and at least 4-5 protein subunits.

The protein resides in the cytoplasm. It catalyses the reaction Endonucleolytic cleavage of RNA, removing 5'-extranucleotides from tRNA precursor.. In terms of biological role, part of ribonuclease P, a protein complex that generates mature tRNA molecules by cleaving their 5'-ends. The protein is Ribonuclease P protein component 2 of Pyrococcus abyssi (strain GE5 / Orsay).